Here is a 966-residue protein sequence, read N- to C-terminus: Leucine--tRNA ligase (966 aa).

Positions 71-82 match the 'HIGH' region motif; it reads PYPSGAGLHVGH. The segment at 561-580 is disordered; sequence YSPRTFDPDDADTKPETPLS. Basic and acidic residues predominate over residues 571–580; the sequence is ADTKPETPLS. The 'KMSKS' region signature appears at 734-738; the sequence is KMGKS. Lys737 is a binding site for ATP.

It belongs to the class-I aminoacyl-tRNA synthetase family.

Its subcellular location is the cytoplasm. It catalyses the reaction tRNA(Leu) + L-leucine + ATP = L-leucyl-tRNA(Leu) + AMP + diphosphate. This Streptomyces coelicolor (strain ATCC BAA-471 / A3(2) / M145) protein is Leucine--tRNA ligase.